Here is a 51-residue protein sequence, read N- to C-terminus: Large ribosomal subunit protein bL33 (51 aa).

It belongs to the bacterial ribosomal protein bL33 family.

The protein is Large ribosomal subunit protein bL33 of Alkalilimnicola ehrlichii (strain ATCC BAA-1101 / DSM 17681 / MLHE-1).